Reading from the N-terminus, the 338-residue chain is Histone acetyltransferase SAS2 (338 aa).

A compositionally biased stretch (polar residues) spans 1-15 (MARSLSQSLTATTQK). The interval 1 to 31 (MARSLSQSLTATTQKLKGKKNGGKGKNKPSA) is disordered. Over residues 16–31 (LKGKKNGGKGKNKPSA) the composition is skewed to basic residues. The MYST-type HAT domain occupies 45 to 338 (LNERNIRQIQ…LKDEYLLIDD (294 aa)). The segment at 100-126 (LFVCEYCFKYTDDQTRFVGHVASCPFQ) adopts a C2HC MYST-type zinc-finger fold. At Lys-168 the chain carries N6-acetyllysine; by autocatalysis. Acetyl-CoA is bound by residues 209-211 (ILI) and 216-222 (QRRGLGL). Glu-242 (proton donor/acceptor) is an active-site residue. Ser-246 and Lys-323 together coordinate acetyl-CoA.

The protein belongs to the MYST (SAS/MOZ) family. Interacts with CAC1. Component of the SAS complex, at least composed of SAS2, SAS4 and SAS5. These three proteins constitute the core of the complex and are sufficient to acetylate histones. SAS4 is essential for HAT activity of the complex, while SAS5 is required for maxiaml HAT activity. In terms of processing, autoacetylation at Lys-168 is required for proper function.

It is found in the cytoplasm. The protein resides in the nucleus. It carries out the reaction L-lysyl-[protein] + acetyl-CoA = N(6)-acetyl-L-lysyl-[protein] + CoA + H(+). Histone acetyltransferase (HAT) subunit of the SAS complex, a multiprotein complex that acetylates 'Lys-16' of histone H4 and 'Lys-14' of histone H3. The SAS complex is however unable to acetylate nucleosomal histones. The complex is involved in transcriptional silencing at telomeres and at HML locus. Also involved in rDNA silencing and G0 control. This chain is Histone acetyltransferase SAS2 (SAS2), found in Saccharomyces cerevisiae (strain ATCC 204508 / S288c) (Baker's yeast).